Here is a 191-residue protein sequence, read N- to C-terminus: UPF0149 protein VV1_1551 (191 aa).

The protein belongs to the UPF0149 family.

The polypeptide is UPF0149 protein VV1_1551 (Vibrio vulnificus (strain CMCP6)).